Consider the following 436-residue polypeptide: Glutamate-1-semialdehyde 2,1-aminomutase (436 aa).

N6-(pyridoxal phosphate)lysine is present on lysine 276.

Belongs to the class-III pyridoxal-phosphate-dependent aminotransferase family. HemL subfamily. As to quaternary structure, homodimer. The cofactor is pyridoxal 5'-phosphate.

The protein localises to the cytoplasm. It carries out the reaction (S)-4-amino-5-oxopentanoate = 5-aminolevulinate. It participates in porphyrin-containing compound metabolism; protoporphyrin-IX biosynthesis; 5-aminolevulinate from L-glutamyl-tRNA(Glu): step 2/2. Its pathway is porphyrin-containing compound metabolism; chlorophyll biosynthesis. This chain is Glutamate-1-semialdehyde 2,1-aminomutase, found in Synechococcus sp. (strain JA-2-3B'a(2-13)) (Cyanobacteria bacterium Yellowstone B-Prime).